Reading from the N-terminus, the 253-residue chain is Anamorsin homolog (253 aa).

The N-terminal SAM-like domain stretch occupies residues 4 to 129 (FKGLQKSLYI…ETGSSARLSF (126 aa)). The interval 130–161 (AKKNSSTLNVWKISGDDDELIDEEDLLDEVDK) is linker. Residues Cys-172, Cys-181, Cys-184, and Cys-186 each coordinate [2Fe-2S] cluster. Residues 172–186 (CSTTGKRKACKNCSC) are fe-S binding site A. 4 residues coordinate [4Fe-4S] cluster: Cys-214, Cys-217, Cys-225, and Cys-228. 2 consecutive short sequence motifs (cx2C motif) follow at residues 214-217 (CGNC) and 225-228 (CSSC). Positions 214-228 (CGNCYLGDAFRCSSC) are fe-S binding site B.

The protein belongs to the anamorsin family. As to quaternary structure, monomer. Requires [2Fe-2S] cluster as cofactor. It depends on [4Fe-4S] cluster as a cofactor.

The protein resides in the cytoplasm. It is found in the mitochondrion intermembrane space. In terms of biological role, component of the cytosolic iron-sulfur (Fe-S) protein assembly (CIA) machinery. Required for the maturation of extramitochondrial Fe-S proteins. Part of an electron transfer chain functioning in an early step of cytosolic Fe-S biogenesis, facilitating the de novo assembly of a [4Fe-4S] cluster on the cytosolic Fe-S scaffold complex. Electrons are transferred from NADPH via a FAD- and FMN-containing diflavin oxidoreductase. Together with the diflavin oxidoreductase, also required for the assembly of the diferric tyrosyl radical cofactor of ribonucleotide reductase (RNR), probably by providing electrons for reduction during radical cofactor maturation in the catalytic small subunit. The chain is Anamorsin homolog from Drosophila willistoni (Fruit fly).